A 113-amino-acid chain; its full sequence is Carboxysome shell protein CcmK1 (113 aa).

The region spanning 4–90 (AVGMIETLGF…PHENLEYVLP (87 aa)) is the BMC domain.

It belongs to the bacterial microcompartments protein family. CcmK subfamily. Homohexamer. Interacts preferentially with CcmK2 and CcmK4a rather than itself in vitro.

The protein localises to the carboxysome. Functionally, one of the shell proteins of the carboxysome, a polyhedral inclusion where RuBisCO (ribulose bisphosphate carboxylase, rbcL-rbcS) is sequestered. Assembles into hexamers which make sheets that form the facets of the polyhedral carboxysome. The hexamer central pore probably regulates metabolite flux. The chain is Carboxysome shell protein CcmK1 from Thermosynechococcus vestitus (strain NIES-2133 / IAM M-273 / BP-1).